The chain runs to 69 residues: Conotoxin AbVIF (69 aa).

Positions 1-17 (VLIIAVLFLTACQLTTA) are cleaved as a signal peptide. A propeptide spanning residues 18–40 (ETSSRGKQKHRALRSTDKNSRMS) is cleaved from the precursor. The interval 20–41 (SSRGKQKHRALRSTDKNSRMSK) is disordered. Disulfide bonds link cysteine 43–cysteine 57, cysteine 50–cysteine 61, and cysteine 56–cysteine 68.

This sequence belongs to the conotoxin O1 superfamily. Expressed by the venom duct.

Its subcellular location is the secreted. The protein is Conotoxin AbVIF of Conus abbreviatus (Abbreviated cone).